Consider the following 73-residue polypeptide: Large ribosomal subunit protein bL31 (73 aa).

The protein belongs to the bacterial ribosomal protein bL31 family. Type A subfamily. Part of the 50S ribosomal subunit.

Functionally, binds the 23S rRNA. This chain is Large ribosomal subunit protein bL31, found in Sinorhizobium fredii (strain NBRC 101917 / NGR234).